The sequence spans 155 residues: UBA-like domain-containing protein 1 (155 aa).

The tract at residues 81–155 is disordered; that stretch reads KASESFNSSS…KASAAMEAER (75 aa). The segment covering 83–96 has biased composition (low complexity); sequence SESFNSSSSPSMAT. The segment covering 112 to 127 has biased composition (polar residues); sequence ANQQSLWTQGPSAQQT. The segment covering 139–155 has biased composition (low complexity); sequence QQAASEQKASAAMEAER.

It belongs to the UBALD family.

The polypeptide is UBA-like domain-containing protein 1 (ubald1) (Danio rerio (Zebrafish)).